We begin with the raw amino-acid sequence, 158 residues long: SsrA-binding protein (158 aa).

It belongs to the SmpB family.

The protein localises to the cytoplasm. In terms of biological role, required for rescue of stalled ribosomes mediated by trans-translation. Binds to transfer-messenger RNA (tmRNA), required for stable association of tmRNA with ribosomes. tmRNA and SmpB together mimic tRNA shape, replacing the anticodon stem-loop with SmpB. tmRNA is encoded by the ssrA gene; the 2 termini fold to resemble tRNA(Ala) and it encodes a 'tag peptide', a short internal open reading frame. During trans-translation Ala-aminoacylated tmRNA acts like a tRNA, entering the A-site of stalled ribosomes, displacing the stalled mRNA. The ribosome then switches to translate the ORF on the tmRNA; the nascent peptide is terminated with the 'tag peptide' encoded by the tmRNA and targeted for degradation. The ribosome is freed to recommence translation, which seems to be the essential function of trans-translation. This chain is SsrA-binding protein, found in Roseiflexus castenholzii (strain DSM 13941 / HLO8).